A 236-amino-acid polypeptide reads, in one-letter code: Cytochrome b-c1 complex subunit Rieske-4, mitochondrial (236 aa).

Residues 1-24 (MINFGSCWGLASVTSNSFSIISGF) constitute a mitochondrion transit peptide. Over 25-73 (SSNSVSHAHDMGLVPDLPPTVAAIKNPTSKIVYDEHNHERYPPGDPSKR) the chain is Mitochondrial matrix. The helical transmembrane segment at 74-96 (AFAYFVLTGGRFVYASLVRLLIL) threads the bilayer. Topologically, residues 97–236 (KFVLSMSASK…FLEENKLLIG (140 aa)) are mitochondrial intermembrane. The Rieske domain maps to 146 to 234 (INLANSVDLG…YSFLEENKLL (89 aa)). 4 residues coordinate [2Fe-2S] cluster: cysteine 179, histidine 181, cysteine 198, and histidine 201. A disulfide bridge connects residues cysteine 184 and cysteine 200.

It belongs to the Rieske iron-sulfur protein family. Component of the ubiquinol-cytochrome c oxidoreductase (cytochrome b-c1 complex, complex III, CIII), a multisubunit enzyme composed of 3 respiratory subunits cytochrome b, cytochrome c1 and Rieske protein, 2 core protein subunits, and several low-molecular weight protein subunits. The complex exists as an obligatory dimer and forms supercomplexes (SCs) in the inner mitochondrial membrane with cytochrome c oxidase (complex IV, CIV). [2Fe-2S] cluster is required as a cofactor.

The protein resides in the mitochondrion inner membrane. The enzyme catalyses a quinol + 2 Fe(III)-[cytochrome c](out) = a quinone + 2 Fe(II)-[cytochrome c](out) + 2 H(+)(out). In terms of biological role, component of the ubiquinol-cytochrome c oxidoreductase, a multisubunit transmembrane complex that is part of the mitochondrial electron transport chain which drives oxidative phosphorylation. The respiratory chain contains 3 multisubunit complexes succinate dehydrogenase (complex II, CII), ubiquinol-cytochrome c oxidoreductase (cytochrome b-c1 complex, complex III, CIII) and cytochrome c oxidase (complex IV, CIV), that cooperate to transfer electrons derived from NADH and succinate to molecular oxygen, creating an electrochemical gradient over the inner membrane that drives transmembrane transport and the ATP synthase. The cytochrome b-c1 complex catalyzes electron transfer from ubiquinol to cytochrome c, linking this redox reaction to translocation of protons across the mitochondrial inner membrane, with protons being carried across the membrane as hydrogens on the quinol. In the process called Q cycle, 2 protons are consumed from the matrix, 4 protons are released into the intermembrane space and 2 electrons are passed to cytochrome c. The Rieske protein is a catalytic core subunit containing a [2Fe-2S] iron-sulfur cluster. It cycles between 2 conformational states during catalysis to transfer electrons from the quinol bound in the Q(0) site in cytochrome b to cytochrome c1. The chain is Cytochrome b-c1 complex subunit Rieske-4, mitochondrial from Nicotiana tabacum (Common tobacco).